A 227-amino-acid chain; its full sequence is Probable septum site-determining protein MinC (227 aa).

The protein belongs to the MinC family. In terms of assembly, interacts with MinD and FtsZ.

Its function is as follows. Cell division inhibitor that blocks the formation of polar Z ring septums. Rapidly oscillates between the poles of the cell to destabilize FtsZ filaments that have formed before they mature into polar Z rings. Prevents FtsZ polymerization. The chain is Probable septum site-determining protein MinC from Shouchella clausii (strain KSM-K16) (Alkalihalobacillus clausii).